The following is a 681-amino-acid chain: MERQRSEEANRRFKDLNPSSLYDNLSKPDLGGSSELHTYMNDTSLADIPLFEDTLASEVSSSLISNPSKNNIQHLHPNTSEPFKTSSKSDEYDSYPRTGNVPTFSFTELNDTSVSGFGSQAVFENSVSPLSNPSNSPQAFDLTQGSSSTHNANDFTVNNVGSRRQSIYEFNIGIPSSNIDSSQFLPVSRAIAASEISPSSSPQLLTSFLPSGSVSNPSSPYLQGSVGALYEADAFNFVDVMSQASGTEVDSERFPSVDFEDPSLLMENQQNITGTGSFADYLQPPSSGSLGAFTNASPGESNTGIDFDTDNTNLNPSVDLLSNHSTPSFIFENSPSAEFSHQSSPYLVPNSGRTLNSENARESTIRSVNSPFSEDHADASLTTHVFDPISPTALSNSVLNYDSNNFSGTPQINVVPSSPSKSQSGPSLPANPLLQTDISITYSQSASPVSGQPAMNENSYDLQNANLCAPEMSPTYTARHRSNSAGSRFDAYEPIPQLYTHFSHSSECLSVNQDTELLGKIENDNSKSNDYLSVRNTRPRSRSLNSLVGNKSENSSSSKAKSESKSQGNYVCTFAGCNKRFTRAYNLKSHMNTHTNYRPFQCSICKKSFARQHDKRRHEQLHTGIKAFACVTCNQRFARMDALNRHYKSEVGQNCLRTATERGIQVPPSRKTAVASTSKQK.

Residues 1–15 (MERQRSEEANRRFKD) are compositionally biased toward basic and acidic residues. Disordered regions lie at residues 1-29 (MERQ…SKPD), 66-96 (NPSK…DSYP), 340-372 (SHQS…NSPF), 410-433 (PQIN…ANPL), and 520-563 (KIEN…AKSE). 2 stretches are compositionally biased toward polar residues: residues 66 to 86 (NPSK…FKTS) and 340 to 358 (SHQS…LNSE). Positions 416 to 428 (PSSPSKSQSGPSL) are enriched in low complexity. A compositionally biased stretch (polar residues) spans 528–549 (SNDYLSVRNTRPRSRSLNSLVG). A phosphoserine mark is found at serine 543 and serine 546. Positions 550 to 559 (NKSENSSSSK) are enriched in low complexity. C2H2-type zinc fingers lie at residues 570–594 (YVCT…MNTH) and 600–622 (FQCS…EQLH). The C2H2-type 3; degenerate zinc finger occupies 628 to 650 (FACVTCNQRFARMDALNRHYKSE). Residues 662 to 681 (RGIQVPPSRKTAVASTSKQK) are disordered.

It belongs to the EGR C2H2-type zinc-finger protein family. Post-translationally, phosphorylated. Dephosphorylated by calcineurin which leads to rapid translocation from the cytoplasm to the nucleus.

It localises to the nucleus. The protein resides in the cytoplasm. In terms of biological role, involved in the regulation of calcium ion homeostasis. Binds to the calcineurin-dependent response element. Transcriptionally regulates pmc1. The polypeptide is Transcriptional regulator prz1 (prz1) (Schizosaccharomyces pombe (strain 972 / ATCC 24843) (Fission yeast)).